Consider the following 627-residue polypeptide: Phosphomethylpyrimidine synthase (627 aa).

Residues 1 to 24 (MSATQKNNITRLEQLDRQSTQPFP) are compositionally biased toward polar residues. A disordered region spans residues 1–29 (MSATQKNNITRLEQLDRQSTQPFPNSRKV). Residues N231, M260, Y289, H325, 345-347 (SRG), 386-389 (DGLR), and E425 each bind substrate. H429 provides a ligand contact to Zn(2+). Y452 provides a ligand contact to substrate. H493 contributes to the Zn(2+) binding site. [4Fe-4S] cluster contacts are provided by C573, C576, and C581.

The protein belongs to the ThiC family. In terms of assembly, homodimer. The cofactor is [4Fe-4S] cluster.

The enzyme catalyses 5-amino-1-(5-phospho-beta-D-ribosyl)imidazole + S-adenosyl-L-methionine = 4-amino-2-methyl-5-(phosphooxymethyl)pyrimidine + CO + 5'-deoxyadenosine + formate + L-methionine + 3 H(+). The protein operates within cofactor biosynthesis; thiamine diphosphate biosynthesis. Catalyzes the synthesis of the hydroxymethylpyrimidine phosphate (HMP-P) moiety of thiamine from aminoimidazole ribotide (AIR) in a radical S-adenosyl-L-methionine (SAM)-dependent reaction. This chain is Phosphomethylpyrimidine synthase, found in Pseudomonas aeruginosa (strain LESB58).